The chain runs to 293 residues: tRNA pseudouridine synthase A (293 aa).

Residue D67 is the Nucleophile of the active site. Residue Y125 participates in substrate binding.

This sequence belongs to the tRNA pseudouridine synthase TruA family. Homodimer.

It carries out the reaction uridine(38/39/40) in tRNA = pseudouridine(38/39/40) in tRNA. In terms of biological role, formation of pseudouridine at positions 38, 39 and 40 in the anticodon stem and loop of transfer RNAs. This Synechococcus sp. (strain CC9605) protein is tRNA pseudouridine synthase A.